A 94-amino-acid chain; its full sequence is Nucleoid-associated protein MYPE8070 (94 aa).

This sequence belongs to the YbaB/EbfC family. In terms of assembly, homodimer.

Its subcellular location is the cytoplasm. The protein localises to the nucleoid. Binds to DNA and alters its conformation. May be involved in regulation of gene expression, nucleoid organization and DNA protection. The chain is Nucleoid-associated protein MYPE8070 from Malacoplasma penetrans (strain HF-2) (Mycoplasma penetrans).